Reading from the N-terminus, the 103-residue chain is Histone H4 (103 aa).

Gly residues predominate over residues 1-14 (MSGRGKGGKGLGKG). The segment at 1–20 (MSGRGKGGKGLGKGGAKRHR) is disordered. Residues 17–21 (KRHRK) mediate DNA binding.

The protein belongs to the histone H4 family. In terms of assembly, the nucleosome is a histone octamer containing two molecules each of H2A, H2B, H3 and H4 assembled in one H3-H4 heterotetramer and two H2A-H2B heterodimers. The octamer wraps approximately 147 bp of DNA.

It localises to the nucleus. The protein localises to the chromosome. Core component of nucleosome. Nucleosomes wrap and compact DNA into chromatin, limiting DNA accessibility to the cellular machineries which require DNA as a template. Histones thereby play a central role in transcription regulation, DNA repair, DNA replication and chromosomal stability. DNA accessibility is regulated via a complex set of post-translational modifications of histones, also called histone code, and nucleosome remodeling. This Eimeria tenella (Coccidian parasite) protein is Histone H4.